The following is a 128-amino-acid chain: Lutropin subunit beta (128 aa).

The first 20 residues, 1–20 (MERLQGLLLWLLLSPSVVWA), serve as a signal peptide directing secretion. 5 cysteine pairs are disulfide-bonded: C29–C77, C43–C92, C54–C108, C58–C110, and C113–C120. N33 carries N-linked (GlcNAc...) asparagine glycosylation.

This sequence belongs to the glycoprotein hormones subunit beta family. As to quaternary structure, heterodimer of a common alpha chain and a unique beta chain which confers biological specificity to thyrotropin, lutropin, follitropin and gonadotropin.

It is found in the secreted. Its function is as follows. Promotes spermatogenesis and ovulation by stimulating the testes and ovaries to synthesize steroids. The polypeptide is Lutropin subunit beta (LHB) (Phodopus sungorus (Striped hairy-footed hamster)).